Here is a 261-residue protein sequence, read N- to C-terminus: MSIQDKPFTIAGVTFSSRLILGTGKYPSHDIMKRCHESSGTEMVTVAVRRLDLKATGEASLMNWIDRNRLRLLPNTALCYTADDAVRTCRLAEELGMSKWVKLEVLGDEKTLYPDVEETVKAARILVKEGFTVLPYTSDDPITARKLEDAGCAAVMPLAAPIGSGLGIRNPHNIRLILETVKVPVIVDAGVGTASDAAIAMELGVEAVLMNTAIAGAQDPVRMAVAMKKAVEAGRDAYLAGRIPRKAYGSASSPIDGLVHH.

Lys-102 serves as the catalytic Schiff-base intermediate with DXP. 1-deoxy-D-xylulose 5-phosphate is bound by residues Gly-163, Ala-189–Gly-190, and Asn-211–Thr-212.

It belongs to the ThiG family. In terms of assembly, homotetramer. Forms heterodimers with either ThiH or ThiS.

The protein localises to the cytoplasm. It carries out the reaction [ThiS sulfur-carrier protein]-C-terminal-Gly-aminoethanethioate + 2-iminoacetate + 1-deoxy-D-xylulose 5-phosphate = [ThiS sulfur-carrier protein]-C-terminal Gly-Gly + 2-[(2R,5Z)-2-carboxy-4-methylthiazol-5(2H)-ylidene]ethyl phosphate + 2 H2O + H(+). Its pathway is cofactor biosynthesis; thiamine diphosphate biosynthesis. In terms of biological role, catalyzes the rearrangement of 1-deoxy-D-xylulose 5-phosphate (DXP) to produce the thiazole phosphate moiety of thiamine. Sulfur is provided by the thiocarboxylate moiety of the carrier protein ThiS. In vitro, sulfur can be provided by H(2)S. The protein is Thiazole synthase of Myxococcus xanthus (strain DK1622).